Here is a 1070-residue protein sequence, read N- to C-terminus: DNA-directed RNA polymerase subunit beta (1070 aa).

It belongs to the RNA polymerase beta chain family. In plastids the minimal PEP RNA polymerase catalytic core is composed of four subunits: alpha, beta, beta', and beta''. When a (nuclear-encoded) sigma factor is associated with the core the holoenzyme is formed, which can initiate transcription.

It is found in the plastid. The protein localises to the chloroplast. It catalyses the reaction RNA(n) + a ribonucleoside 5'-triphosphate = RNA(n+1) + diphosphate. In terms of biological role, DNA-dependent RNA polymerase catalyzes the transcription of DNA into RNA using the four ribonucleoside triphosphates as substrates. This Solanum tuberosum (Potato) protein is DNA-directed RNA polymerase subunit beta.